Consider the following 286-residue polypeptide: ATP synthase gamma chain (286 aa).

The protein belongs to the ATPase gamma chain family. As to quaternary structure, F-type ATPases have 2 components, CF(1) - the catalytic core - and CF(0) - the membrane proton channel. CF(1) has five subunits: alpha(3), beta(3), gamma(1), delta(1), epsilon(1). CF(0) has three main subunits: a, b and c.

The protein localises to the cell inner membrane. Functionally, produces ATP from ADP in the presence of a proton gradient across the membrane. The gamma chain is believed to be important in regulating ATPase activity and the flow of protons through the CF(0) complex. The sequence is that of ATP synthase gamma chain from Shewanella putrefaciens (strain CN-32 / ATCC BAA-453).